Consider the following 344-residue polypeptide: Heptahelical transmembrane protein 3 (344 aa).

The Cytoplasmic portion of the chain corresponds to 1 to 76 (MKRRRSAKKS…AFSWHNETLN (76 aa)). The helical transmembrane segment at 77–97 (IWTHLIGFGIFLWMTVVSCLE) threads the bilayer. Residues 98–147 (TTEISLAGVFNGMAGVRICLSSNQTLLHDSNVTHHISCLTSQGEAIPKWP) are Extracellular-facing. Residues 148 to 168 (WLVYLVGAMGCLICSSVSHLL) traverse the membrane as a helical segment. The Cytoplasmic portion of the chain corresponds to 169–184 (ACHSKRFNVFFWRLDY). The chain crosses the membrane as a helical span at residues 185 to 205 (AGISLMIVASFFAPIYYAFSC). The Extracellular portion of the chain corresponds to 206-210 (HPNFR). Residues 211-231 (LLYLSSISILGLLAIITLLSP) traverse the membrane as a helical segment. At 232–244 (ALSTPRFRPFRAN) the chain is on the cytoplasmic side. The chain crosses the membrane as a helical span at residues 245–265 (LFLAMGSSAVIPATHVLCLYW). Over 266–269 (DHPN) the chain is Extracellular. Residues 270–290 (VFIALGYEIATALSYFVGATF) traverse the membrane as a helical segment. Topologically, residues 291–312 (YVSRVPERWKPGAFDMAGHSHQ) are cytoplasmic. A helical membrane pass occupies residues 313-333 (IFHVFVVMGALAHCVTTLLII). Over 334 to 344 (DFSRASPSCGF) the chain is Extracellular.

Belongs to the ADIPOR family. As to expression, expressed in roots and flowers.

It localises to the membrane. Its function is as follows. May play a role in abiotic stress response. The sequence is that of Heptahelical transmembrane protein 3 (HHP3) from Arabidopsis thaliana (Mouse-ear cress).